We begin with the raw amino-acid sequence, 235 residues long: Carbohydrate deacetylase (235 aa).

Mg(2+) contacts are provided by His-61 and His-124.

Belongs to the YdjC deacetylase family. The cofactor is Mg(2+).

Functionally, probably catalyzes the deacetylation of acetylated carbohydrates an important step in the degradation of oligosaccharides. The chain is Carbohydrate deacetylase from Bacillus cereus (strain 03BB102).